A 242-amino-acid chain; its full sequence is Lactate utilization protein A 2 (242 aa).

The protein belongs to the LutA/YkgE family.

Functionally, is involved in L-lactate degradation and allows cells to grow with lactate as the sole carbon source. This is Lactate utilization protein A 2 from Bacillus cereus (strain 03BB102).